The chain runs to 367 residues: Cytochrome-c peroxidase IdrP2 (367 aa).

An N-terminal signal peptide occupies residues M1–A28. Cytochrome c domains lie at D47–Q157 and S200–S345. Residues C69, C72, H73, C215, C218, and H219 each coordinate heme c.

As to quaternary structure, the iodate reductase (Idr) complex is composed of a molybdopterin-dependent iodate reductase (IdrA and IdrB subunits) and two associated peroxidases (IdrP1 and IdrP2). Heme c is required as a cofactor.

It localises to the periplasm. It catalyses the reaction 2 Fe(II)-[cytochrome c] + H2O2 + 2 H(+) = 2 Fe(III)-[cytochrome c] + 2 H2O. Its function is as follows. Involved in iodate respiration. May play a critical role in detoxification of inadvertent H(2)O(2) generated by the iodate reductase IdrA/IdrB. This is Cytochrome-c peroxidase IdrP2 from Denitromonas iodatirespirans.